Here is a 354-residue protein sequence, read N- to C-terminus: S-adenosylmethionine:tRNA ribosyltransferase-isomerase (354 aa).

Belongs to the QueA family. As to quaternary structure, monomer.

It is found in the cytoplasm. It carries out the reaction 7-aminomethyl-7-carbaguanosine(34) in tRNA + S-adenosyl-L-methionine = epoxyqueuosine(34) in tRNA + adenine + L-methionine + 2 H(+). The protein operates within tRNA modification; tRNA-queuosine biosynthesis. In terms of biological role, transfers and isomerizes the ribose moiety from AdoMet to the 7-aminomethyl group of 7-deazaguanine (preQ1-tRNA) to give epoxyqueuosine (oQ-tRNA). This is S-adenosylmethionine:tRNA ribosyltransferase-isomerase from Salmonella newport (strain SL254).